We begin with the raw amino-acid sequence, 299 residues long: NAD kinase (299 aa).

Catalysis depends on aspartate 71, which acts as the Proton acceptor. NAD(+)-binding positions include 71–72, 145–146, arginine 173, aspartate 175, 186–191, alanine 210, and glutamine 248; these read DG, ND, and TAYSLS.

The protein belongs to the NAD kinase family. The cofactor is a divalent metal cation.

It is found in the cytoplasm. It catalyses the reaction NAD(+) + ATP = ADP + NADP(+) + H(+). Functionally, involved in the regulation of the intracellular balance of NAD and NADP, and is a key enzyme in the biosynthesis of NADP. Catalyzes specifically the phosphorylation on 2'-hydroxyl of the adenosine moiety of NAD to yield NADP. In Bordetella pertussis (strain Tohama I / ATCC BAA-589 / NCTC 13251), this protein is NAD kinase.